We begin with the raw amino-acid sequence, 242 residues long: Zinc import ATP-binding protein ZnuC (242 aa).

The ABC transporter domain occupies 24 to 241 (INVKDLSFAY…EKFLKMFSSY (218 aa)). 56-63 (GPNGGGKT) lines the ATP pocket.

It belongs to the ABC transporter superfamily. Zinc importer (TC 3.A.1.15.5) family. As to quaternary structure, the complex is composed of two ATP-binding proteins (ZnuC), two transmembrane proteins (ZnuB) and a solute-binding protein (ZnuA).

It localises to the cell inner membrane. The catalysed reaction is Zn(2+)(out) + ATP(in) + H2O(in) = Zn(2+)(in) + ADP(in) + phosphate(in) + H(+)(in). Part of the ABC transporter complex ZnuABC involved in zinc import. Responsible for energy coupling to the transport system. In Ehrlichia ruminantium (strain Gardel), this protein is Zinc import ATP-binding protein ZnuC.